Reading from the N-terminus, the 145-residue chain is Large ribosomal subunit protein bL17 (145 aa).

It belongs to the bacterial ribosomal protein bL17 family. In terms of assembly, part of the 50S ribosomal subunit. Contacts protein L32.

The polypeptide is Large ribosomal subunit protein bL17 (Orientia tsutsugamushi (strain Boryong) (Rickettsia tsutsugamushi)).